Consider the following 168-residue polypeptide: G/U mismatch-specific DNA glycosylase (168 aa).

The protein belongs to the uracil-DNA glycosylase (UDG) superfamily. TDG/mug family. Binds DNA as a monomer.

It localises to the cytoplasm. The enzyme catalyses Specifically hydrolyzes mismatched double-stranded DNA and polynucleotides, releasing free uracil.. In terms of biological role, excises ethenocytosine and uracil, which can arise by alkylation or deamination of cytosine, respectively, from the corresponding mispairs with guanine in ds-DNA. It is capable of hydrolyzing the carbon-nitrogen bond between the sugar-phosphate backbone of the DNA and the mispaired base. The complementary strand guanine functions in substrate recognition. Required for DNA damage lesion repair in stationary-phase cells. This chain is G/U mismatch-specific DNA glycosylase, found in Klebsiella pneumoniae (strain 342).